Consider the following 691-residue polypeptide: Elongation factor G (691 aa).

Residues 8–283 (EKQRNIGIMA…AVVQYLPSPL (276 aa)) form the tr-type G domain. Residues 17-24 (AHIDAGKT), 81-85 (DTPGH), and 135-138 (NKMD) contribute to the GTP site.

This sequence belongs to the TRAFAC class translation factor GTPase superfamily. Classic translation factor GTPase family. EF-G/EF-2 subfamily.

It is found in the cytoplasm. In terms of biological role, catalyzes the GTP-dependent ribosomal translocation step during translation elongation. During this step, the ribosome changes from the pre-translocational (PRE) to the post-translocational (POST) state as the newly formed A-site-bound peptidyl-tRNA and P-site-bound deacylated tRNA move to the P and E sites, respectively. Catalyzes the coordinated movement of the two tRNA molecules, the mRNA and conformational changes in the ribosome. The chain is Elongation factor G from Lawsonia intracellularis (strain PHE/MN1-00).